The following is a 2170-amino-acid chain: Brefeldin A-inhibited guanine nucleotide-exchange protein 3 (2170 aa).

Serine 471 is modified (phosphoserine). 2 disordered regions span residues 489–547 and 613–634; these read EHTP…MGKV and AAEK…CSLA. A compositionally biased stretch (polar residues) spans 503-524; it reads ISISVTTDTGQTTLEGELGQTT. The SEC7 domain maps to 579-792; that stretch reads RTRSYGSRYS…EELYHQVLDR (214 aa). Residues 614-623 are compositionally biased toward basic and acidic residues; the sequence is AEKDSGRSDV. A phosphoserine mark is found at serine 628, serine 632, and serine 1045. Residues 1488-1508 form a helical membrane-spanning segment; sequence PGFGIYAVVHLLLPVMSLWLL. The segment at 1843-1872 is disordered; the sequence is SSDSSQQCSSEDEDIFEETAQVSPPRGKEK. Residue serine 1881 is modified to Phosphoserine. Residues 1938–1955 show a composition bias toward polar residues; sequence FQSESSTPSTGGFSGKNT. Disordered stretches follow at residues 1938-1997 and 2024-2058; these read FQSE…RKKE and KRRQ…PLLQ. Residues 1956–1966 show a composition bias toward basic and acidic residues; that stretch reads PSEDDRREHLS. Residues serine 1975 and serine 1984 each carry the phosphoserine modification. Composition is skewed to basic and acidic residues over residues 1986-1997 and 2036-2045; these read KTEKKDPGRKKE and KEVKVDKKGE. A phosphoserine mark is found at serine 2072, serine 2074, serine 2088, serine 2094, and serine 2096. The disordered stretch occupies residues 2078–2097; that stretch reads ELLRQEKRPRSGSTGSSLSV. Positions 2088 to 2097 are enriched in low complexity; it reads SGSTGSSLSV.

Interacts with PHB2. As to expression, expressed in pancreatic islet (insulin granules of islet alpha and beta cells) and brain (at protein level).

The protein resides in the cytoplasmic vesicle. It localises to the secretory vesicle. Its subcellular location is the secretory vesicle membrane. Functionally, participates in the regulation of systemic glucose homeostasis, where it negatively regulates insulin granule biogenesis in pancreatic islet beta cells. Also regulates glucagon granule production in pancreatic alpha cells. Inhibits nuclear translocation of the transcriptional coregulator PHB2 and may enhance estrogen receptor alpha (ESR1) transcriptional activity in breast cancer cells. This chain is Brefeldin A-inhibited guanine nucleotide-exchange protein 3, found in Mus musculus (Mouse).